The following is an 837-amino-acid chain: Zinc fingers and homeoboxes protein 2 (837 aa).

The interval 1 to 41 (MASKRKSTTPCMVRTSQVVEQDVPEEVDRAKEKGIGTPQPD) is disordered. The segment at 27 to 77 (VDRAKEKGIGTPQPDVAKDCWAAELENSSKENEVIEVKSMGESQSKKLQGG) is interaction with EFNB1. Position 37 is a phosphothreonine (Thr37). Lys64 participates in a covalent cross-link: Glycyl lysine isopeptide (Lys-Gly) (interchain with G-Cter in SUMO2). 2 C2H2-type zinc fingers span residues 78–101 (YECKYCPYSTQNLNEFTEHVDMQH) and 110–133 (YVCAECNFTTKKYDSLSDHNSKFH). Residues 167-180 (TSGPGTGDSDSGIS) are compositionally biased toward low complexity. A disordered region spans residues 167–203 (TSGPGTGDSDSGISVSKTPIMKPGKPKADAKKVPKKP). Residues 192-203 (PKADAKKVPKKP) show a composition bias toward basic and acidic residues. The segment at 195-358 (DAKKVPKKPE…PAQLAPTKVT (164 aa)) is required for homodimerization. 4 consecutive DNA-binding regions (homeobox) follow at residues 263 to 324 (NTTK…WSPE), 439 to 501 (TPAS…IVHI), 530 to 591 (PQKF…EQAV), and 628 to 690 (SPSP…TVKW). The segment at 263-446 (NTTKYNSALD…PLTPASDRKK (184 aa)) is required for repressor activity. The interval 263–497 (NTTKYNSALD…SDHRYRCQRG (235 aa)) is required for interaction with NFYA. The tract at residues 317-446 (HGISWSPEEV…PLTPASDRKK (130 aa)) is required for nuclear localization. The tract at residues 404–445 (GQKRPLVTPQAAPEPKRPHIAQVPEPPPKVANPPLTPASDRK) is disordered. A compositionally biased stretch (pro residues) spans 427-439 (PEPPPKVANPPLT). A Glycyl lysine isopeptide (Lys-Gly) (interchain with G-Cter in SUMO2) cross-link involves residue Lys455. Positions 754-837 (EPAKDCLPAK…DCVPAEAGQA (84 aa)) are disordered. 2 positions are modified to phosphoserine: Ser825 and Ser827.

The protein belongs to the ZHX family. In terms of assembly, homodimer (via homeobox domain 1). Heterodimer with ZHX1 (via homeobox domain 1). Heterodimer with ZHX3 (via homeobox domain 1). Heterodimerization with ZHX1 is not necessary for repressor activity. Interacts (via homeobox domain) with NFYA (via N-terminus). Interacts with EFNB1 intracellular domain peptide; the interaction enhances ZHX2 transcriptional repression activity.

The protein localises to the nucleus. Functionally, acts as a transcriptional repressor. Represses the promoter activity of the CDC25C gene stimulated by NFYA. May play a role in retinal development where it regulates the composition of bipolar cell populations, by promoting differentiation of bipolar OFF-type cells. In the brain, may promote maintenance and suppress differentiation of neural progenitor cells in the developing cortex. The chain is Zinc fingers and homeoboxes protein 2 (ZHX2) from Pongo abelii (Sumatran orangutan).